Consider the following 122-residue polypeptide: Large ribosomal subunit protein uL18 (122 aa).

A compositionally biased stretch (basic residues) spans 1–16 (MFKKVDRKASRQKKQM). A disordered region spans residues 1 to 29 (MFKKVDRKASRQKKQMSIRNKISGTPERP).

This sequence belongs to the universal ribosomal protein uL18 family. As to quaternary structure, part of the 50S ribosomal subunit; part of the 5S rRNA/L5/L18/L25 subcomplex. Contacts the 5S and 23S rRNAs.

Functionally, this is one of the proteins that bind and probably mediate the attachment of the 5S RNA into the large ribosomal subunit, where it forms part of the central protuberance. The chain is Large ribosomal subunit protein uL18 from Fusobacterium nucleatum subsp. nucleatum (strain ATCC 25586 / DSM 15643 / BCRC 10681 / CIP 101130 / JCM 8532 / KCTC 2640 / LMG 13131 / VPI 4355).